Here is a 239-residue protein sequence, read N- to C-terminus: Guanylate kinase (239 aa).

Residues 19–197 (GLLIVVTGAS…AVSELLAVQQ (179 aa)) enclose the Guanylate kinase-like domain. 26–33 (GASGVGKG) contributes to the ATP binding site.

Belongs to the guanylate kinase family.

It localises to the cytoplasm. It carries out the reaction GMP + ATP = GDP + ADP. Essential for recycling GMP and indirectly, cGMP. This Deinococcus radiodurans (strain ATCC 13939 / DSM 20539 / JCM 16871 / CCUG 27074 / LMG 4051 / NBRC 15346 / NCIMB 9279 / VKM B-1422 / R1) protein is Guanylate kinase (gmk).